Here is a 45-residue protein sequence, read N- to C-terminus: Photosystem II reaction center protein K (45 aa).

Positions 1–8 (MEAALLLA) are excised as a propeptide. The chain crosses the membrane as a helical span at residues 24 to 44 (LPIIPLFFLALAFVWQAAVGF).

Belongs to the PsbK family. As to quaternary structure, PSII is composed of 1 copy each of membrane proteins PsbA, PsbB, PsbC, PsbD, PsbE, PsbF, PsbH, PsbI, PsbJ, PsbK, PsbL, PsbM, PsbT, PsbX, PsbY, PsbZ, Psb30/Ycf12, peripheral proteins PsbO, CyanoQ (PsbQ), PsbU, PsbV and a large number of cofactors. It forms dimeric complexes.

The protein localises to the cellular thylakoid membrane. Functionally, one of the components of the core complex of photosystem II (PSII). PSII is a light-driven water:plastoquinone oxidoreductase that uses light energy to abstract electrons from H(2)O, generating O(2) and a proton gradient subsequently used for ATP formation. It consists of a core antenna complex that captures photons, and an electron transfer chain that converts photonic excitation into a charge separation. The sequence is that of Photosystem II reaction center protein K from Rippkaea orientalis (strain PCC 8801 / RF-1) (Cyanothece sp. (strain PCC 8801)).